The sequence spans 170 residues: MARVEL domain-containing protein 1 (170 aa).

Topologically, residues 1 to 38 (MEGERPRSDTVTTTVSSHMETISLGGSIAYDRSFLRSP) are cytoplasmic. One can recognise an MARVEL domain in the interval 34–167 (FLRSPTGVLL…STYFSFQAWR (134 aa)). The helical transmembrane segment at 39 to 59 (TGVLLLMEIMFGLLVWALIAG) threads the bilayer. Residues 60–67 (SEYFLFSA) lie on the Extracellular side of the membrane. A helical transmembrane segment spans residues 68-88 (FGWVMFVAVFYWVLSVFFFLL). Residues 89–102 (HLTRANTRITKVPW) are Cytoplasmic-facing. A helical transmembrane segment spans residues 103–123 (SLVGLCFNGSAFVLYLIAAVV). At 124–145 (EASSVNKDVHQHHNYNSWTASS) the chain is on the extracellular side. Residues 146–166 (FFAFIVTVCYALSTYFSFQAW) form a helical membrane-spanning segment. Over 167 to 170 (RTKS) the chain is Cytoplasmic.

It is found in the membrane. It localises to the nucleus. The chain is MARVEL domain-containing protein 1 (marveld1) from Xenopus laevis (African clawed frog).